We begin with the raw amino-acid sequence, 474 residues long: L-arabinose isomerase (474 aa).

Glu-306, Glu-331, His-348, and His-447 together coordinate Mn(2+).

This sequence belongs to the arabinose isomerase family. Mn(2+) is required as a cofactor.

The catalysed reaction is beta-L-arabinopyranose = L-ribulose. It functions in the pathway carbohydrate degradation; L-arabinose degradation via L-ribulose; D-xylulose 5-phosphate from L-arabinose (bacterial route): step 1/3. Its function is as follows. Catalyzes the conversion of L-arabinose to L-ribulose. The protein is L-arabinose isomerase of Oceanobacillus iheyensis (strain DSM 14371 / CIP 107618 / JCM 11309 / KCTC 3954 / HTE831).